A 603-amino-acid chain; its full sequence is Aspartate--tRNA(Asp/Asn) ligase (603 aa).

Glu-187 contacts L-aspartate. Residues 211-214 (QQFK) are aspartate. L-aspartate is bound by residues Arg-233 and His-461. Residue 233-235 (RDE) coordinates ATP. An ATP-binding site is contributed by Glu-495. Arg-502 contacts L-aspartate. 547-550 (GLDR) provides a ligand contact to ATP.

It belongs to the class-II aminoacyl-tRNA synthetase family. Type 1 subfamily. In terms of assembly, homodimer.

The protein localises to the cytoplasm. The enzyme catalyses tRNA(Asx) + L-aspartate + ATP = L-aspartyl-tRNA(Asx) + AMP + diphosphate. In terms of biological role, aspartyl-tRNA synthetase with relaxed tRNA specificity since it is able to aspartylate not only its cognate tRNA(Asp) but also tRNA(Asn). Reaction proceeds in two steps: L-aspartate is first activated by ATP to form Asp-AMP and then transferred to the acceptor end of tRNA(Asp/Asn). This Chlorobaculum parvum (strain DSM 263 / NCIMB 8327) (Chlorobium vibrioforme subsp. thiosulfatophilum) protein is Aspartate--tRNA(Asp/Asn) ligase.